The sequence spans 128 residues: Ribonuclease pancreatic (128 aa).

The segment at 1 to 25 (KESSAKKFQRQHIDSSGSPSTNPNY) is disordered. Lys7 and Arg10 together coordinate substrate. Residue His12 is the Proton acceptor of the active site. Residues 14–25 (DSSGSPSTNPNY) show a composition bias toward polar residues. 4 cysteine pairs are disulfide-bonded: Cys26–Cys84, Cys40–Cys95, Cys58–Cys110, and Cys65–Cys72. Asn34 carries N-linked (GlcNAc...) asparagine glycosylation. Substrate-binding positions include 41-45 (KPVNT), Lys66, and Arg85. His119 acts as the Proton donor in catalysis.

Belongs to the pancreatic ribonuclease family. Monomer. Interacts with and forms tight 1:1 complexes with RNH1. Dimerization of two such complexes may occur. Interaction with RNH1 inhibits this protein. As to expression, pancreas.

It is found in the secreted. The enzyme catalyses an [RNA] containing cytidine + H2O = an [RNA]-3'-cytidine-3'-phosphate + a 5'-hydroxy-ribonucleotide-3'-[RNA].. It carries out the reaction an [RNA] containing uridine + H2O = an [RNA]-3'-uridine-3'-phosphate + a 5'-hydroxy-ribonucleotide-3'-[RNA].. Endonuclease that catalyzes the cleavage of RNA on the 3' side of pyrimidine nucleotides. Acts on single-stranded and double-stranded RNA. The polypeptide is Ribonuclease pancreatic (RNASE1) (Proechimys guairae (Guaira spiny rat)).